Consider the following 343-residue polypeptide: RNA-binding protein 43 (343 aa).

An RRM domain is found at 15-90; sequence RTVVVSGLPV…PLLTVSHFSE (76 aa). The tract at residues 170–200 is disordered; the sequence is RRNWTGQNPRRVLQKNENSAPTLGTSVPEPA. The segment covering 184–194 has biased composition (polar residues); it reads KNENSAPTLGT.

The sequence is that of RNA-binding protein 43 (Rbm43) from Rattus norvegicus (Rat).